The sequence spans 261 residues: Glucose 1-dehydrogenase 3 (261 aa).

11-35 provides a ligand contact to NAD(+); it reads VITGGSTGLGRAMAVRFGQEEAKVV. Substrate is bound at residue Ser145. Catalysis depends on Tyr158, which acts as the Proton acceptor.

Belongs to the short-chain dehydrogenases/reductases (SDR) family. Homotetramer.

The enzyme catalyses D-glucose + NAD(+) = D-glucono-1,5-lactone + NADH + H(+). It catalyses the reaction D-glucose + NADP(+) = D-glucono-1,5-lactone + NADPH + H(+). The protein is Glucose 1-dehydrogenase 3 (gdhIII) of Priestia megaterium (Bacillus megaterium).